Reading from the N-terminus, the 302-residue chain is MGAMDVQLESTAVQHGQAKINVEEHALVSLLSDEKYATEKTEDVDPDDYEKLEEGIMQYGCAHYRRRCRIRAPCCNEIFDCRHCHNETKNSIKIDAVKRHELPRHEVQQVICSLCGTEQEVRQVCISCGVCMGKYFCEVCKLFDDDVSKQQYHCNGCGICRIGGKENFFHCSKCGCCYSIVLKNSHACVEGAMHHDCPICFEYLFESTNDVSVLPCGHTIHVKCLREMEEHCQFACPLCSKSVCDMSKAWERLDEELATISDTCDNKMVRILCNDCGATSEVQFHLIAHKCQKCKSYNTRQI.

The CHY-type zinc-finger motif lies at 54 to 130 (EGIMQYGCAH…VRQVCISCGV (77 aa)). Zn(2+)-binding residues include cysteine 61, histidine 63, cysteine 74, cysteine 75, cysteine 81, cysteine 84, histidine 85, histidine 100, cysteine 112, cysteine 115, cysteine 125, cysteine 128, cysteine 137, cysteine 140, histidine 153, cysteine 154, cysteine 157, cysteine 160, histidine 170, cysteine 171, cysteine 174, cysteine 177, histidine 186, and cysteine 188. The segment at 132–196 (MGKYFCEVCK…ACVEGAMHHD (65 aa)) adopts a CTCHY-type zinc-finger fold. The RING-type; atypical zinc finger occupies 197 to 240 (CPICFEYLFESTNDVSVLPCGHTIHVKCLREMEEHCQFACPLCS).

The protein localises to the nucleus. The enzyme catalyses S-ubiquitinyl-[E2 ubiquitin-conjugating enzyme]-L-cysteine + [acceptor protein]-L-lysine = [E2 ubiquitin-conjugating enzyme]-L-cysteine + N(6)-ubiquitinyl-[acceptor protein]-L-lysine.. Its pathway is protein modification; protein ubiquitination. Possesses transactivation activity in yeast cells. Involved in the regulation of stomatal aperture. May modulate the expression of genes that control stomata opening during heat shock or drought stress. This chain is Probable E3 ubiquitin-protein ligase RZFP34, found in Oryza sativa subsp. japonica (Rice).